The sequence spans 1065 residues: MEKKVSAIPQPKTYGPLGNLPLIDKDKPTLSFIKIAEEYGPIFQIQTLSDTIIVVSGHELVAEVCDETRFDKSIEGALAKVRAFAGDGLFTSETHEPNWKKAHNILMPTFSQRAMKDYHAMMVDIAVQLVQKWARLNPNENVDVPEDMTRLTLDTIGLCGFNYRFNSFYRETPHPFITSMTRALDEAMHQLQRLDIEDKLMWRTKRQFQHDIQSMFSLVDNIIAERKSSGDQEENDLLSRMLNVPDPETGEKLDDENIRFQIITFLIAGHETTSGLLSFAIYFLLKNPDKLKKAYEEVDRVLTDPTPTYQQVMKLKYMRMILNESLRLWPTAPAFSLYAKEDTVIGGKYPIKKGEDRISVLIPQLHRDKDAWGDNVEEFQPERFEELDKVPHHAYKPFGNGQRACIGMQFALHEATLVMGMLLQHFELIDYQNYQLDVKQTLTLKPGDFKIRILPRKQTISHPTVLAPTEDKLKNDEIKQHVQKTPSIIGADNLSLLVLYGSDTGVAEGIARELADTASLEGVQTEVVALNDRIGSLPKEGAVLIVTSSYNGKPPSNAGQFVQWLEELKPDELKGVQYAVFGCGDHNWASTYQRIPRYIDEQMAQKGATRFSKRGEADASGDFEEQLEQWKQNMWSDAMKAFGLELNKNMEKERSTLSLQFVSRLGGSPLARTYEAVYASILENRELQSSSSDRSTRHIEVSLPEGATYKEGDHLGVLPVNSEKNINRILKRFGLNGKDQVILSASGRSINHIPLDSPVSLLALLSYSVEVQEAATRAQIREMVTFTACPPHKKELEALLEEGVYHEQILKKRISMLDLLEKYEACEIRFERFLELLPALKPRYYSISSSPLVAHNRLSITVGVVNAPAWSGEGTYEGVASNYLAQRHNKDEIICFIRTPQSNFELPKDPETPIIMVGPGTGIAPFRGFLQARRVQKQKGMNLGQAHLYFGCRHPEKDYLYRTELENDERDGLISLHTAFSRLEGHPKTYVQHLIKQDRINLISLLDNGAHLYICGDGSKMAPDVEDTLCQAYQEIHEVSEQEARNWLDRVQDEGRYGKDVWAGI.

The cytochrome P450 stretch occupies residues 1 to 479 (MEKKVSAIPQ…EDKLKNDEIK (479 aa)). C405 contributes to the heme binding site. Positions 480-1065 (QHVQKTPSII…RYGKDVWAGI (586 aa)) are NADPH--P450 reductase. The Flavodoxin-like domain occupies 496-635 (LLVLYGSDTG…QLEQWKQNMW (140 aa)). FMN contacts are provided by residues 502-507 (SDTGVA), 549-552 (SYNG), 583-585 (CGD), and 591-593 (TYQ). The 234-residue stretch at 674–907 (YEAVYASILE…RTPQSNFELP (234 aa)) folds into the FAD-binding FR-type domain.

This sequence in the N-terminal section; belongs to the cytochrome P450 family. The cofactor is heme. FAD serves as cofactor. Requires FMN as cofactor.

The catalysed reaction is 2 oxidized [cytochrome P450] + NADPH = 2 reduced [cytochrome P450] + NADP(+) + H(+). The enzyme catalyses an organic molecule + reduced [NADPH--hemoprotein reductase] + O2 = an alcohol + oxidized [NADPH--hemoprotein reductase] + H2O + H(+). Functions as a fatty acid monooxygenase. Catalyzes hydroxylation of fatty acids at omega-1, omega-2 and omega-3 positions, yielding primarily omega-1 and omega-2 hydroxylated products. Metabolizes unsaturated and saturated fatty acids as well as N-acylamino acids. Has a preference for long-chain unsaturated fatty acids over saturated fatty acids. Shows activity toward saturated fatty acids with a chain length of 9-18 carbons with preference for longer fatty acids. Also displays a NADPH-dependent reductase activity in the C-terminal domain, which allows electron transfer from NADPH to the heme iron of the cytochrome P450 N-terminal domain. This Bacillus cereus (strain ATCC 14579 / DSM 31 / CCUG 7414 / JCM 2152 / NBRC 15305 / NCIMB 9373 / NCTC 2599 / NRRL B-3711) protein is Bifunctional cytochrome P450/NADPH--P450 reductase.